A 365-amino-acid chain; its full sequence is Probable 7-methylxanthine methyltransferase 3 (365 aa).

Tyr-18 contributes to the S-adenosyl-L-homocysteine binding site. Thr-25 lines the theobromine pocket. S-adenosyl-L-homocysteine is bound by residues Cys-62, Gln-67, Asp-99, Leu-100, Ser-132, and Phe-133. Positions 150, 153, and 154 each coordinate theobromine. Residues Asn-170, Phe-258, and Asn-259 each coordinate Mg(2+). A theobromine-binding site is contributed by Phe-311.

The protein belongs to the methyltransferase superfamily. Type-7 methyltransferase family. It depends on Mg(2+) as a cofactor.

The catalysed reaction is 7-methylxanthine + S-adenosyl-L-methionine = theobromine + S-adenosyl-L-homocysteine + H(+). It functions in the pathway alkaloid biosynthesis. Functionally, involved in the biosynthesis of theobromine. The sequence is that of Probable 7-methylxanthine methyltransferase 3 from Theobroma cacao (Cacao).